Here is a 201-residue protein sequence, read N- to C-terminus: 3-isopropylmalate dehydratase small subunit (201 aa).

This sequence belongs to the LeuD family. LeuD type 1 subfamily. As to quaternary structure, heterodimer of LeuC and LeuD.

It carries out the reaction (2R,3S)-3-isopropylmalate = (2S)-2-isopropylmalate. The protein operates within amino-acid biosynthesis; L-leucine biosynthesis; L-leucine from 3-methyl-2-oxobutanoate: step 2/4. Catalyzes the isomerization between 2-isopropylmalate and 3-isopropylmalate, via the formation of 2-isopropylmaleate. This is 3-isopropylmalate dehydratase small subunit from Methylorubrum extorquens (strain CM4 / NCIMB 13688) (Methylobacterium extorquens).